The following is a 366-amino-acid chain: MSKRIRLGIVGLSADPSHCTNYIHKIPLTTTPLKEKYEITAVSMSSPEKAEAAAIAHGLPRERGYHSVESLAKDPDVDLVVVSVKVPRRAELAMAAIEAGKDVYVEWPFASNLAAAEALAQRARERQVKSMVGLPTRLAPQVLKMKEILRSGSLGRILATNLLVTDDLFLKFHADKRHSHDKTNGANIVTIAGGHLLDAMAFLLGEFTTLHAHTSMLFPKPVLCDTDGNLKTGQFNDSPDTFTMHGKIGISEVPVSVCMYSHPPTTPNLFQWVITGEKGSLKMEGPSLMIHAIPPKLMMTSFGSETVCWEEISLENTIVSGAEYQAWLDNDTERIVTLDEAVVRYRMVDAILRSAESGQCTSYRYD.

Residues 1–19 (MSKRIRLGIVGLSADPSHC) form the signal peptide. Asparagine 330 carries N-linked (GlcNAc...) asparagine glycosylation.

The protein belongs to the Gfo/Idh/MocA family.

It participates in mycotoxin biosynthesis. Functionally, dehydrogenase; part of the gene cluster that mediates the biosynthesis of aspirochlorine (or antibiotic A30641), an unusual halogenated spiro compound with distinctive antifungal properties due to selective inhibition of protein biosynthesis, and which is also active against bacteria, viruses, and murine tumor cells. The non-ribosomal peptide synthetase (NRPS) aclP is responsible the formation of the diketopiperazine (DKP) core from the condensation of 2 phenylalanine residues. One Phe residue is tailored into chlorotyrosine by hydroxylation and chlorination, whereas the second Phe undergoes an unprecedented C-C bond cleavage to be converted into glycine. After formation of the DKP, sulfur is incorporated into the DKP by conjugation with glutathione by aclG, followed by its stepwise degradation to the thiol by aclI, aclJ and aclK, and the dithiol oxidation by aclT. In addition, oxygenases (aclB, aclC, aclL and aclO) and O-methyltransferases (aclM and aclU) act as tailoring enzymes to produce the intermediate dechloroaspirochlorine. Ultimately, chlorination of dechloroaspirochlorine by the halogenase aclH is the last step in the aspirochlorine pathway. The chain is Dehydrogenase aclE from Aspergillus oryzae (strain ATCC 42149 / RIB 40) (Yellow koji mold).